The chain runs to 91 residues: DNA-directed RNA polymerase subunit omega (91 aa).

The protein belongs to the RNA polymerase subunit omega family. In terms of assembly, the RNAP catalytic core consists of 2 alpha, 1 beta, 1 beta' and 1 omega subunit. When a sigma factor is associated with the core the holoenzyme is formed, which can initiate transcription.

It catalyses the reaction RNA(n) + a ribonucleoside 5'-triphosphate = RNA(n+1) + diphosphate. Its function is as follows. Promotes RNA polymerase assembly. Latches the N- and C-terminal regions of the beta' subunit thereby facilitating its interaction with the beta and alpha subunits. The polypeptide is DNA-directed RNA polymerase subunit omega (Nocardia farcinica (strain IFM 10152)).